A 664-amino-acid polypeptide reads, in one-letter code: DNA ligase (664 aa).

NAD(+) is bound by residues 32–36 and 80–81; these read DKDYD and SL. The active-site N6-AMP-lysine intermediate is the Lys-122. The NAD(+) site is built by Arg-144, Glu-178, and Lys-314. Positions 407, 410, 423, and 429 each coordinate Zn(2+). The BRCT domain occupies 587–664; that stretch reads IKENIFNGKT…SEEDFKNMIG (78 aa).

Belongs to the NAD-dependent DNA ligase family. LigA subfamily. The cofactor is Mg(2+). It depends on Mn(2+) as a cofactor.

The enzyme catalyses NAD(+) + (deoxyribonucleotide)n-3'-hydroxyl + 5'-phospho-(deoxyribonucleotide)m = (deoxyribonucleotide)n+m + AMP + beta-nicotinamide D-nucleotide.. DNA ligase that catalyzes the formation of phosphodiester linkages between 5'-phosphoryl and 3'-hydroxyl groups in double-stranded DNA using NAD as a coenzyme and as the energy source for the reaction. It is essential for DNA replication and repair of damaged DNA. The sequence is that of DNA ligase from Clostridium novyi (strain NT).